An 82-amino-acid polypeptide reads, in one-letter code: MLVLTRKLKEAIQIGDDIEITVLVIQGDQVKLGINAPKHVEIHRKEIYLAIQAENNAASFASKTSLERLTEQLKHLKGGKQA.

It belongs to the CsrA/RsmA family. As to quaternary structure, homodimer; the beta-strands of each monomer intercalate to form a hydrophobic core, while the alpha-helices form wings that extend away from the core.

Its subcellular location is the cytoplasm. In terms of biological role, a translational regulator that binds mRNA to regulate translation initiation and/or mRNA stability. Usually binds in the 5'-UTR at or near the Shine-Dalgarno sequence preventing ribosome-binding, thus repressing translation. Its main target seems to be the major flagellin gene, while its function is anatagonized by FliW. The chain is Translational regulator CsrA from Geobacillus kaustophilus (strain HTA426).